The following is a 151-amino-acid chain: Deoxyuridine 5'-triphosphate nucleotidohydrolase (151 aa).

Residues 70-72 (RSG), N83, 87-89 (LID), and M97 contribute to the substrate site.

The protein belongs to the dUTPase family. It depends on Mg(2+) as a cofactor.

The catalysed reaction is dUTP + H2O = dUMP + diphosphate + H(+). Its pathway is pyrimidine metabolism; dUMP biosynthesis; dUMP from dCTP (dUTP route): step 2/2. Its function is as follows. This enzyme is involved in nucleotide metabolism: it produces dUMP, the immediate precursor of thymidine nucleotides and it decreases the intracellular concentration of dUTP so that uracil cannot be incorporated into DNA. This Pseudomonas fluorescens (strain ATCC BAA-477 / NRRL B-23932 / Pf-5) protein is Deoxyuridine 5'-triphosphate nucleotidohydrolase.